Here is a 196-residue protein sequence, read N- to C-terminus: MNQADPRLRAVCLWTLTSAAMSRGDNCTDLLALGIPSITQAWGLWVLLGAVTLLFLISLAAHLSQWTRGRSRSHPGQGRSGESVEEVPLYGNLHYLQTGRLSQDPEPDQQDPTLGGPARAAEEVMCYTSLQLRPPQGRIPGPGTPVKYSEVVLDSEPKSQASGPEPELYASVCAQTRRARASFPDQAYANSQPAAS.

Residues 1-24 form the signal peptide; that stretch reads MNQADPRLRAVCLWTLTSAAMSRG. Residues 25-40 lie on the Extracellular side of the membrane; sequence DNCTDLLALGIPSITQ. N-linked (GlcNAc...) asparagine glycosylation is present at asparagine 26. A helical membrane pass occupies residues 41–61; the sequence is AWGLWVLLGAVTLLFLISLAA. At 62–196 the chain is on the cytoplasmic side; the sequence is HLSQWTRGRS…AYANSQPAAS (135 aa). Phosphoserine is present on residues serine 80 and serine 83. Tyrosine 90 bears the Phosphotyrosine mark. Residues 90–93 form an interaction with GRB2 region; the sequence is YGNL. Serine 102 bears the Phosphoserine mark. Tyrosine 127 bears the Phosphotyrosine mark. A disordered region spans residues 132-167; sequence LRPPQGRIPGPGTPVKYSEVVLDSEPKSQASGPEPE. Phosphothreonine is present on threonine 144. Residues 146–151 form an interaction with PTPN11 region; sequence VKYSEV. 2 positions are modified to phosphotyrosine: tyrosine 148 and tyrosine 169. The interval 169 to 172 is interaction with CSK; it reads YASV. Serine 182 carries the post-translational modification Phosphoserine. Phosphotyrosine is present on tyrosine 188. The tract at residues 188–191 is interaction with GRB2; the sequence is YANS.

In terms of assembly, homodimer; disulfide-linked. When phosphorylated, interacts with PTPN11/SHP2, GRB2 and CSK. Post-translationally, phosphorylated on tyrosines by LCK, FYN or ZAP70 upon TCR activation; which leads to the recruitment of PTPN11, GRB2 and CSK. Specifically expressed in T- and B-cells. Present in plasma cells but not in germinal center B-cells (at protein level). Expressed in T- and B-cell lymphoma.

Its subcellular location is the cell membrane. Its function is as follows. Negatively regulates TCR (T-cell antigen receptor)-mediated signaling in T-cells. Involved in positive selection of T-cells. This is Signaling threshold-regulating transmembrane adapter 1 (SIT1) from Homo sapiens (Human).